The sequence spans 322 residues: Mas-related G-protein coupled receptor member X3 (322 aa).

Topologically, residues 1–31 (MDPTIPALGTSQTPINRREETPCYKQTLSLT) are extracellular. Residues 32 to 52 (VLTCIISLVGLTGNAVVLWLL) form a helical membrane-spanning segment. Residues 53–60 (GFRMRRNA) are Cytoplasmic-facing. Residues 61 to 81 (VSTYILNLAAVDFLFLSGHIV) form a helical membrane-spanning segment. Residues 82 to 96 (RSPLRLISIRHPISK) lie on the Extracellular side of the membrane. The helical transmembrane segment at 97–117 (IVNPVMTFPYFIGLSMLSAIS) threads the bilayer. At 118-139 (TERCLSVLWPMWYRCRRPRHLS) the chain is on the cytoplasmic side. Residues 140-160 (VVVCVLLWALSLLRSILEWMF) traverse the membrane as a helical segment. The Extracellular segment spans residues 161–177 (CDFLFSGADSVWCETSD). Residues 178–198 (FITIAWLIFLCVVLCGSSLVL) form a helical membrane-spanning segment. At 199–213 (LVRILCGSRKMPLTR) the chain is on the cytoplasmic side. A helical transmembrane segment spans residues 214–234 (LYVTILLTVLVFLLCGLPFGI). Topologically, residues 235–254 (QWALFSRIHLDWKVLFCHVH) are extracellular. A helical transmembrane segment spans residues 255-275 (LISVFLSSLNSSANPIIYFFV). At 276–322 (GSFRQRQNRQNLKLVLQRALQDTPEVDEGGGRLPEETLELSVSRLEQ) the chain is on the cytoplasmic side.

It belongs to the G-protein coupled receptor 1 family. Mas subfamily.

The protein resides in the cell membrane. Orphan receptor. Probably involved in the function of nociceptive neurons. May regulate nociceptor function and/or development, including the sensation or modulation of pain. Potently activated by enkephalins. The sequence is that of Mas-related G-protein coupled receptor member X3 (MRGPRX3) from Macaca mulatta (Rhesus macaque).